Here is a 331-residue protein sequence, read N- to C-terminus: Homoarginine-6-hydroxylase 2-ODD-C23 (331 aa).

The Fe2OG dioxygenase domain occupies 182 to 289; it reads PFWVMRLIGY…RVSVVYFYET (108 aa). His212, Asp214, and His270 together coordinate Fe cation. Arg280 contacts 2-oxoglutarate.

This sequence belongs to the iron/ascorbate-dependent oxidoreductase family. Fe(2+) serves as cofactor.

Its subcellular location is the cytoplasm. It localises to the cytosol. It carries out the reaction L-homoarginine + 2-oxoglutarate + O2 = 6-hydroxy-L-homoarginine + succinate + CO2. 2-oxoglutarate-dependent dioxygenase catalyzing homoarginine 6-hydroxylation thus producing 6-hydroxy-L-homoarginine. Guanidine (Gd) is in turn synthesized by the spontaneous conversion of 6-hydroxy-L-homoarginine to (S)-2-amino-6-oxohexanoate (RHEA:79843); guanidine is a nitrogen-rich compound that can serve as a defense or signaling substance. This Glycine max (Soybean) protein is Homoarginine-6-hydroxylase 2-ODD-C23.